The sequence spans 387 residues: Protein FAM153B (387 aa).

2 disordered regions span residues 233-256 (SYNG…RGDL) and 327-374 (TITG…KKSR). Low complexity predominate over residues 336 to 345 (SASPSSAPAE). Residues 347 to 359 (ATEKTKVEEEVKT) show a composition bias toward basic and acidic residues. The segment covering 360–374 (RKPKKKTRKPSKKSR) has biased composition (basic residues).

It belongs to the FAM153 family.

The protein is Protein FAM153B (FAM153B) of Homo sapiens (Human).